We begin with the raw amino-acid sequence, 1018 residues long: Pikachurin (1018 aa).

A signal peptide spans 1 to 23 (MDLIRGVLLRLLLLASSLGPGAA). Fibronectin type-III domains are found at residues 37–145 (PPLD…TLPQ) and 153–248 (APQQ…TARP). Asn47 carries N-linked (GlcNAc...) asparagine glycosylation. The interval 228–274 (VNPHGSSPRSQPSSTIRTARPEESGSGRYGPHYATDTEAGEDDDTFE) is disordered. Residues 231-244 (HGSSPRSQPSSTIR) are compositionally biased toward polar residues. Positions 265–274 (EAGEDDDTFE) are enriched in acidic residues. Residues 352–390 (FDTSCDETVCSADSFCVSDYTWGGSRCHCNLGKGGESCS) form the EGF-like 1 domain. Cystine bridges form between Cys356-Cys367, Cys361-Cys378, Cys380-Cys389, Cys543-Cys573, Cys578-Cys589, Cys583-Cys599, Cys601-Cys610, Cys797-Cys808, Cys802-Cys817, Cys819-Cys828, and Cys988-Cys1015. The Laminin G-like 1 domain maps to 395 to 573 (IQYPQFFGHS…ALSGADVGEC (179 aa)). EGF-like domains lie at 574 to 611 (SSGICDEASCINGGTCMASKADSYICLCPLGFRGRHCE) and 793 to 829 (AAHPCVGSPCAHGGSCRPRKEGYECDCPLGFEGLHCQ). Positions 618 to 797 (IPQFKESLRS…VNVENAAHPC (180 aa)) constitute a Laminin G-like 2 domain. The 180-residue stretch at 836-1015 (IEIPQFIGRS…AVDGKNINTC (180 aa)) folds into the Laminin G-like 3 domain.

In terms of assembly, interacts with DAG1 alpha-dystroglycan. Interacts with GPR158 and GPR179; transsynaptic interaction is required for synaptic organization of photoreceptor cells. Post-translationally, O-glycosylated; contains chondroitin sulfate and heparan sulfate.

The protein localises to the secreted. The protein resides in the extracellular space. It localises to the extracellular matrix. Its subcellular location is the synaptic cleft. It is found in the presynaptic active zone. Its function is as follows. Involved in both the retinal photoreceptor ribbon synapse formation and physiological functions of visual perception. Plays a key role in the synaptic organization of photoreceptors by mediating transsynaptic interaction between alpha-dystroglycan and GPR179 on the postsynaptic membrane. Necessary for proper bipolar dendritic tip apposition to the photoreceptor ribbon synapse. Promotes matrix assembly and cell adhesiveness. This chain is Pikachurin (EGFLAM), found in Bos taurus (Bovine).